The chain runs to 128 residues: Lutropin subunit beta (128 aa).

6 disulfide bridges follow: Cys-18–Cys-66, Cys-32–Cys-81, Cys-35–Cys-119, Cys-43–Cys-97, Cys-47–Cys-99, and Cys-102–Cys-109. Residue Asn-22 is glycosylated (N-linked (GlcNAc...) asparagine).

The protein belongs to the glycoprotein hormones subunit beta family. In terms of assembly, heterodimer of a common alpha chain and a unique beta chain which confers biological specificity to thyrotropin, lutropin, follitropin and gonadotropin.

It localises to the secreted. Its function is as follows. Promotes spermatogenesis and ovulation by stimulating the testes and ovaries to synthesize steroids. This Struthio camelus (Common ostrich) protein is Lutropin subunit beta (LHB).